The sequence spans 370 residues: ECF RNA polymerase sigma factor SigG (370 aa).

Residues 63-129 are sigma-70 factor domain-2; sequence EPYRRELLAH…LTALEGRRRR (67 aa). A Polymerase core binding motif is present at residues 85–88; the sequence is DLVQ. The interval 180 to 232 is sigma-70 factor domain-4; the sequence is LAFVAALQHLSPRQRAVLLLRDVLQWKSAEVADAIGTSTVAVNSLLQRARSQL. A DNA-binding region (H-T-H motif) is located at residues 207 to 226; the sequence is SAEVADAIGTSTVAVNSLLQ.

It belongs to the sigma-70 factor family. ECF subfamily. As to quaternary structure, interacts transiently with the RNA polymerase catalytic core formed by RpoA, RpoB, RpoC and RpoZ (2 alpha, 1 beta, 1 beta' and 1 omega subunit) to form the RNA polymerase holoenzyme that can initiate transcription.

Its function is as follows. Sigma factors are initiation factors that promote the attachment of RNA polymerase to specific initiation sites and are then released. Extracytoplasmic function (ECF) sigma factors are held in an inactive form by a cognate anti-sigma factor until released, although no anti-sigma factor is known for this protein. May be involved in host intracellular survival after infection (strains H37Rv and CDC 1551). A role in the SOS response is controversial; it has been seen in strain CDC 1551 but not in H37Rv. This Mycobacterium tuberculosis (strain CDC 1551 / Oshkosh) protein is ECF RNA polymerase sigma factor SigG (sigG).